The chain runs to 197 residues: MLYEMKPLGCEPAKLTGLSEKLIFSHYENNYGGAVKRLNAITATLAELDMATAPVFTLNGLKREELIATNSMILHEVYFDSLGDGGSLDGALKTAIERDFGSVERWQAEFTAMGKALGGGSGWVLLTYSPRDGRLVNQWASDHAHTLAGGTPVLALDMYEHSYHMDYGAKAAAYVDAFMQNIHWQRAATRFAAAVRD.

Positions 26, 75, 157, and 161 each coordinate Fe cation.

It belongs to the iron/manganese superoxide dismutase family. As to quaternary structure, homotetramer. It depends on Fe cation as a cofactor.

The catalysed reaction is 2 superoxide + 2 H(+) = H2O2 + O2. Functionally, destroys superoxide anion radicals which are normally produced within the cells and which are toxic to biological systems. The sequence is that of Superoxide dismutase [Fe] from Cupriavidus metallidurans (strain ATCC 43123 / DSM 2839 / NBRC 102507 / CH34) (Ralstonia metallidurans).